The sequence spans 207 residues: Outer-membrane lipoprotein LolB (207 aa).

The first 26 residues, 1–26, serve as a signal peptide directing secretion; sequence MSKLKIDTKRRFSLLIALVLIISLSS. The N-palmitoyl cysteine moiety is linked to residue C27. Residue C27 is the site of S-diacylglycerol cysteine attachment.

This sequence belongs to the LolB family. Monomer.

It is found in the cell outer membrane. Plays a critical role in the incorporation of lipoproteins in the outer membrane after they are released by the LolA protein. This is Outer-membrane lipoprotein LolB from Francisella tularensis subsp. tularensis (strain WY96-3418).